The following is a 336-amino-acid chain: MSMNNITSKMNQDSYGYFQLHMSDFTRVSLSIVFTLVFLVGIIGNAVIIWFIGFKWTKTISTLLFINLALADSLFLIFIPVYTVYVLSNFHWYLGEFLCRVSSFFFTTNMYASMFLLTFISIDKYLTLTSHRLVYKYRKYRNYYVCIGAIWCISIALGVPTLYYKRVILSSSRNETRCISYYGDDKHTAITIYRIIVCIRFIIGYVFPMTVILLSYALIVYKVKFINKPPNRSFMITTASIFVFLACWTPHHVLNIISLYGLKSTSMYNYIKESIPFVNAIAFVYSAINPIIYIFVIRLTSTYDSDTMDELRSALLDEETTSTEDCSDIEISDISR.

Residues M1–S31 lie on the Extracellular side of the membrane. N-linked (GlcNAc...) asparagine; by host glycosylation is present at N5. The helical transmembrane segment at I32 to I52 threads the bilayer. The Cytoplasmic segment spans residues G53–L63. Residues L64 to V84 traverse the membrane as a helical segment. Residues Y85–V101 lie on the Extracellular side of the membrane. C99 and C178 are joined by a disulfide. A helical membrane pass occupies residues S102 to I122. Topologically, residues D123–Y143 are cytoplasmic. A helical transmembrane segment spans residues Y144 to Y164. Residues K165–R200 lie on the Extracellular side of the membrane. An N-linked (GlcNAc...) asparagine; by host glycan is attached at N174. A helical membrane pass occupies residues F201 to Y221. Residues K222–S240 are Cytoplasmic-facing. Residues I241–G261 form a helical membrane-spanning segment. Over L262 to P276 the chain is Extracellular. The helical transmembrane segment at F277–I297 threads the bilayer. The Cytoplasmic portion of the chain corresponds to R298 to R336.

It belongs to the G-protein coupled receptor 1 family.

Its subcellular location is the host cell membrane. This chain is G-protein coupled receptor homolog FPV027, found in Vertebrata (FPV).